The chain runs to 819 residues: MDSTTNSDSPILDPNPEDVEKLLDESEEESEDQSTERLLPSELFILPLNKRPFFPGMAAPILIESGPYYEVLKVLAKSSQKYIGLVLTKKENADILKVSFNQLHKTGVAARILRIMPIEGGSAQVLLSIEERIRIIEPIKDKYLKARVSYHADNKELTEELKAYSISIVSVIKDLLKLNPLFKEELQIFLGHSDFTEPGKLADFSVALTTATREELQEVLETTNMHDRIDKALILLKKELDLSRLQSSINQKIEATITKSQKEFFLKEQLKTIKKELGLEKEDRAIDIEKFSERLRKRHVPDYAMEVIQDEIEKLQTLETSSAEYTVCRNYLDWLTIIPWGIQSKEYHDLKKAEIVLNKDHYGLDEIKQRILELISVGKLSKGLKGSIICLVGPPGVGKTSIGRSIAKVLHRKFFRFSVGGMRDEAEIKGHRRTYIGAMPGKMVQALKQSQAMNPVIMIDEVDKIGASYHGDPASALLEVLDPEQNKDFLDHYLDVRVDLSNVLFILTANVLDTIPDPLLDRMEILRLSGYILEEKLQIAKKYLVPKARKEIGLTASEVNFQPEALKYMINNYAREAGVRTLNGNIKKVLRKVALKIVQNQEKPKSKKITFKISSKNLQTYLGKPIFSSDRFYESTPVGVATGLAWTSLGGATLYIESVQVSSLKTDMHLTGQAGEVMKESSQIAWTYLHSALHRYAPGYTFFPKSQVHIHIPEGATPKDGPSAGITMVTSLLSLLLETPVVNNLGMTGEITLTGRVLGVGGIREKLIAARRSRLNILIFPEDNRRDYEELPAYLKTGLKIHFVSHYDDVLKVAFPKLK.

Residues 1–36 are disordered; that stretch reads MDSTTNSDSPILDPNPEDVEKLLDESEEESEDQSTE. Positions 43–240 constitute a Lon N-terminal domain; it reads LFILPLNKRP…KALILLKKEL (198 aa). Position 393 to 400 (393 to 400) interacts with ATP; it reads GPPGVGKT. One can recognise a Lon proteolytic domain in the interval 635–817; the sequence is STPVGVATGL…DDVLKVAFPK (183 aa). Residues serine 723 and lysine 766 contribute to the active site.

The protein belongs to the peptidase S16 family. Homohexamer. Organized in a ring with a central cavity.

It is found in the cytoplasm. The enzyme catalyses Hydrolysis of proteins in presence of ATP.. In terms of biological role, ATP-dependent serine protease that mediates the selective degradation of mutant and abnormal proteins as well as certain short-lived regulatory proteins. Required for cellular homeostasis and for survival from DNA damage and developmental changes induced by stress. Degrades polypeptides processively to yield small peptide fragments that are 5 to 10 amino acids long. Binds to DNA in a double-stranded, site-specific manner. This is Lon protease from Chlamydia pneumoniae (Chlamydophila pneumoniae).